Here is a 432-residue protein sequence, read N- to C-terminus: Adenylosuccinate synthetase (432 aa).

GTP contacts are provided by residues 12 to 18 (GDEGKGK) and 40 to 42 (GHT). Catalysis depends on aspartate 13, which acts as the Proton acceptor. Mg(2+) is bound by residues aspartate 13 and glycine 40. Residues 13–16 (DEGK), 38–41 (NAGH), threonine 132, arginine 146, glutamine 226, threonine 241, and arginine 305 contribute to the IMP site. Histidine 41 (proton donor) is an active-site residue. Residue 301-307 (TVTGRKR) participates in substrate binding. Residues arginine 307, 333–335 (KLD), and 415–417 (STS) each bind GTP.

Belongs to the adenylosuccinate synthetase family. As to quaternary structure, homodimer. Mg(2+) is required as a cofactor.

The protein localises to the cytoplasm. The enzyme catalyses IMP + L-aspartate + GTP = N(6)-(1,2-dicarboxyethyl)-AMP + GDP + phosphate + 2 H(+). The protein operates within purine metabolism; AMP biosynthesis via de novo pathway; AMP from IMP: step 1/2. Plays an important role in the de novo pathway of purine nucleotide biosynthesis. Catalyzes the first committed step in the biosynthesis of AMP from IMP. This Sinorhizobium medicae (strain WSM419) (Ensifer medicae) protein is Adenylosuccinate synthetase.